The following is an 801-amino-acid chain: Fibroblast growth factor receptor 3 (801 aa).

The signal sequence occupies residues 1–20 (MVVPACVLVFCVAVVAGATS). Topologically, residues 21–369 (EPPGPEQRVV…TDEAGSVYAG (349 aa)) are extracellular. The 103-residue stretch at 22 to 124 (PPGPEQRVVR…VLCHFSVRVT (103 aa)) folds into the Ig-like C2-type 1 domain. An intrachain disulfide couples Cys-59 to Cys-107. Asn-96 carries an N-linked (GlcNAc...) asparagine glycan. The segment at 125-146 (DAPSSGDDEDGEDVAEDTGAPY) is disordered. The segment covering 130 to 140 (GDDEDGEDVAE) has biased composition (acidic residues). 2 Ig-like C2-type domains span residues 145 to 238 (PYWT…YTLD) and 247 to 349 (PILQ…AWLV). Cys-170 and Cys-222 are oxidised to a cystine. N-linked (GlcNAc...) asparagine glycans are attached at residues Asn-219, Asn-256, Asn-288, Asn-309, and Asn-322. The cysteines at positions 269 and 333 are disulfide-linked. A helical membrane pass occupies residues 370–390 (VLSYGVVFFLFILVVAAVILC). Residues 391 to 801 (RLRSPPKKGL…GPPSNGGPRT (411 aa)) are Cytoplasmic-facing. 2 positions are modified to phosphoserine: Ser-438 and Ser-439. One can recognise a Protein kinase domain in the interval 466–756 (LTLGKPLGEG…LTVTSTDEYL (291 aa)). Residues 472–480 (LGEGCFGQV) and Lys-502 contribute to the ATP site. The active-site Proton acceptor is the Asp-611. A phosphotyrosine; by autocatalysis mark is found at Tyr-641, Tyr-642, Tyr-719, and Tyr-755. The disordered stretch occupies residues 762 to 801 (FEQYSPGGQDTPSSSSSGDDSVFTHDLLPPGPPSNGGPRT). Residues 766–782 (SPGGQDTPSSSSSGDDS) are compositionally biased toward low complexity. Positions 790 to 801 (PPGPPSNGGPRT) are enriched in pro residues.

It belongs to the protein kinase superfamily. Tyr protein kinase family. Fibroblast growth factor receptor subfamily. As to quaternary structure, monomer. Homodimer after ligand binding. Interacts with FGF1, FGF2, FGF4, FGF6; FGF8, FGF9, FGF10, FGF17, FGF18, FGF19, FGF20 and FGF23 (in vitro). Interacts with KLB. Affinity for fibroblast growth factors (FGFs) is increased by heparan sulfate glycosaminoglycans that function as coreceptors. Likewise, KLB increases the affinity for FGF19 and FGF21. Interacts with PIK3R1, PLCG1, SOCS1 and SOCS3. Post-translationally, autophosphorylated. Binding of FGF family members together with heparan sulfate proteoglycan or heparin promotes receptor dimerization and autophosphorylation on tyrosine residues. Autophosphorylation occurs in trans between the two FGFR molecules present in the dimer. Phosphorylation at Tyr-719 is essential for stimulation of cell proliferation and activation of PIK3R1, STAT1 and MAP kinase signaling. Phosphorylation at Tyr-755 is required for interaction with PIK3R1 and PLCG1. Ubiquitinated. Is rapidly ubiquitinated after ligand binding and autophosphorylation, leading to receptor internalization and degradation. Subject to both proteasomal and lysosomal degradation. In terms of processing, N-glycosylated in the endoplasmic reticulum. The N-glycan chains undergo further maturation to an Endo H-resistant form in the Golgi apparatus. As to expression, in embryo, expressed in heart, lung, kidney, skin, head and liver but not in muscle. In adult, highest levels in brain. Also expressed in liver, lung, kidney, testis, ovary and uterus. Very low levels in heart, thymus, spleen and muscle.

The protein resides in the cell membrane. It is found in the cytoplasmic vesicle. Its subcellular location is the endoplasmic reticulum. The enzyme catalyses L-tyrosyl-[protein] + ATP = O-phospho-L-tyrosyl-[protein] + ADP + H(+). Its activity is regulated as follows. Present in an inactive conformation in the absence of bound ligand. Ligand binding leads to dimerization and activation by autophosphorylation on tyrosine residues. In terms of biological role, tyrosine-protein kinase that acts as a cell-surface receptor for fibroblast growth factors and plays an essential role in the regulation of cell proliferation, differentiation and apoptosis. Plays an essential role in the regulation of chondrocyte differentiation, proliferation and apoptosis, and is required for normal skeleton development. Regulates both osteogenesis and postnatal bone mineralization by osteoblasts. Promotes apoptosis in chondrocytes, but can also promote cancer cell proliferation. Required for normal development of the inner ear. Phosphorylates PLCG1, CBL and FRS2. Ligand binding leads to the activation of several signaling cascades. Activation of PLCG1 leads to the production of the cellular signaling molecules diacylglycerol and inositol 1,4,5-trisphosphate. Phosphorylation of FRS2 triggers recruitment of GRB2, GAB1, PIK3R1 and SOS1, and mediates activation of RAS, MAPK1/ERK2, MAPK3/ERK1 and the MAP kinase signaling pathway, as well as of the AKT1 signaling pathway. Plays a role in the regulation of vitamin D metabolism. Mutations that lead to constitutive kinase activation or impair normal FGFR3 maturation, internalization and degradation lead to aberrant signaling. Over-expressed or constitutively activated FGFR3 promotes activation of STAT1, STAT5A and STAT5B. Plays a role in postnatal lung development. The sequence is that of Fibroblast growth factor receptor 3 (Fgfr3) from Mus musculus (Mouse).